We begin with the raw amino-acid sequence, 364 residues long: Lysophosphatidic acid receptor 1 (364 aa).

At 1–50 (MAAASTSSPVISQPQFTAMNEQQCFYNESIAFFYNRSGKYLATEWNTVSK) the chain is on the extracellular side. Intrachain disulfides connect Cys24–Cys190 and Cys188–Cys195. 2 N-linked (GlcNAc...) asparagine glycosylation sites follow: Asn27 and Asn35. Position 39 (Lys39) interacts with a 1-acyl-sn-glycero-3-phosphate. Residues 51–75 (LVMGLGITVCVFIMLANLLVMVAIY) form a helical membrane-spanning segment. At 76 to 83 (VNRRFHFP) the chain is on the cytoplasmic side. The helical transmembrane segment at 84–107 (IYYLMANLAAADFFAGLAYFYLMF) threads the bilayer. Residues 108–121 (NTGPNTRRLTVSTW) lie on the Extracellular side of the membrane. The chain crosses the membrane as a helical span at residues 122–144 (LLRQGLIDTSLTASVANLLAIAI). 124 to 129 (RQGLID) provides a ligand contact to a 1-acyl-sn-glycero-3-phosphate. Residues 145 to 163 (ERHITVFRMQLHTRMSNRR) lie on the Cytoplasmic side of the membrane. The helical transmembrane segment at 164–184 (VVVVIVVIWTMAIVMGAIPSV) threads the bilayer. At 185 to 204 (GWNCICDIDHCSNMAPLYSD) the chain is on the extracellular side. Residues 205–225 (SYLVFWAIFNLVTFVVMVVLY) form a helical membrane-spanning segment. Trp210 provides a ligand contact to a 1-acyl-sn-glycero-3-phosphate. Residues 226-255 (AHIFGYVRQRTMRMSRHSSGPRRNRDTMMS) lie on the Cytoplasmic side of the membrane. Residues 256 to 280 (LLKTVVIVLGAFIVCWTPGLVLLLL) form a helical membrane-spanning segment. The Extracellular segment spans residues 281–294 (DVCCPQCDVLAYEK). A disulfide bridge connects residues Cys284 and Cys287. The chain crosses the membrane as a helical span at residues 295–315 (FFLLLAEFNSAMNPIIYSYRD). Over 316 to 364 (KEMSATFRQILCCQRNENPNGPTEGSDRSASSLNHTILAGVHSNDHSVV) the chain is Cytoplasmic. Ser341 carries the phosphoserine modification. A Phosphothreonine modification is found at Thr351.

Belongs to the G-protein coupled receptor 1 family. Interacts with RALA and GRK2. Interacts with GNAQ and GNA13. Interacts with CD14; the interaction is enhanced by exposure to bacterial lipopolysaccharide (LPS). In terms of processing, N-glycosylated. Detected in lung. Detected in oligodendrocytes in corpus callosum in brain cortex (at protein level). Expressed within the embryonic cerebral cortex, where it is enriched in the ventricular zone. In the adult brain, also expressed in oligodendrocytes, as well as Schwann cells of the peripheral nervous system. Expressed in many other tissues, including lung, heart, intestine, spleen, thymus, and stomach. No expression in liver. Detected in kidney and testis. Detected in embryonic fibroblasts. Detected in adult lung fibroblasts and lung endothelial cells. Detected in dorsal root ganglion and dorsal root. Detected in astrocytes. Detected in bone.

It is found in the cell surface. The protein resides in the cell membrane. Its subcellular location is the endosome. Its function is as follows. Receptor for lysophosphatidic acid (LPA). Plays a role in the reorganization of the actin cytoskeleton, cell migration, differentiation and proliferation, and thereby contributes to the responses to tissue damage and infectious agents. Activates downstream signaling cascades via the G(i)/G(o), G(12)/G(13), and G(q) families of heteromeric G proteins. Signaling inhibits adenylyl cyclase activity and decreases cellular cAMP levels. Signaling triggers an increase of cytoplasmic Ca(2+) levels. Activates RALA; this leads to the activation of phospholipase C (PLC) and the formation of inositol 1,4,5-trisphosphate. Signaling mediates activation of down-stream MAP kinases. Contributes to the regulation of cell shape. Promotes Rho-dependent reorganization of the actin cytoskeleton in neuronal cells and neurite retraction. Promotes the activation of Rho and the formation of actin stress fibers. Promotes formation of lamellipodia at the leading edge of migrating cells via activation of RAC1. Through its function as LPA receptor, plays a role in chemotaxis and cell migration, including responses to injury and wounding. Plays a role in triggering inflammation in response to bacterial lipopolysaccharide (LPS) via its interaction with CD14. Promotes cell proliferation in response to LPA. Inhibits the intracellular ciliogenesis pathway in response to LPA and through AKT1 activation. Required for normal skeleton development. May play a role in osteoblast differentiation. Required for normal brain development. Required for normal proliferation, survival and maturation of newly formed neurons in the adult dentate gyrus. Plays a role in pain perception and in the initiation of neuropathic pain. This chain is Lysophosphatidic acid receptor 1 (Lpar1), found in Mus musculus (Mouse).